The sequence spans 342 residues: Heat-inducible transcription repressor HrcA (342 aa).

It belongs to the HrcA family.

Negative regulator of class I heat shock genes (grpE-dnaK-dnaJ and groELS operons). Prevents heat-shock induction of these operons. This Mesoplasma florum (strain ATCC 33453 / NBRC 100688 / NCTC 11704 / L1) (Acholeplasma florum) protein is Heat-inducible transcription repressor HrcA.